Reading from the N-terminus, the 162-residue chain is Shikimate kinase (162 aa).

ATP is bound at residue 11–16; the sequence is GSGKSS. Ser-15 contributes to the Mg(2+) binding site. Substrate-binding residues include Asp-33, Arg-57, and Gly-80. Arg-116 lines the ATP pocket. Arg-132 is a binding site for substrate.

This sequence belongs to the shikimate kinase family. In terms of assembly, monomer. The cofactor is Mg(2+).

It is found in the cytoplasm. The enzyme catalyses shikimate + ATP = 3-phosphoshikimate + ADP + H(+). The protein operates within metabolic intermediate biosynthesis; chorismate biosynthesis; chorismate from D-erythrose 4-phosphate and phosphoenolpyruvate: step 5/7. In terms of biological role, catalyzes the specific phosphorylation of the 3-hydroxyl group of shikimic acid using ATP as a cosubstrate. The sequence is that of Shikimate kinase from Helicobacter pylori (strain Shi470).